A 133-amino-acid polypeptide reads, in one-letter code: UPF0225 protein BPP1723 (133 aa).

Belongs to the UPF0225 family.

In Bordetella parapertussis (strain 12822 / ATCC BAA-587 / NCTC 13253), this protein is UPF0225 protein BPP1723.